Consider the following 266-residue polypeptide: uncharacterized protein (266 aa).

Residues 13–33 (IIGLMLIIFAGILFYAYILQH) form a helical membrane-spanning segment.

It belongs to the LicD transferase family.

Its subcellular location is the membrane. This is an uncharacterized protein from Rickettsia prowazekii (strain Madrid E).